Here is a 172-residue protein sequence, read N- to C-terminus: Adenine phosphoribosyltransferase (172 aa).

Belongs to the purine/pyrimidine phosphoribosyltransferase family. In terms of assembly, homodimer.

The protein resides in the cytoplasm. The catalysed reaction is AMP + diphosphate = 5-phospho-alpha-D-ribose 1-diphosphate + adenine. Its pathway is purine metabolism; AMP biosynthesis via salvage pathway; AMP from adenine: step 1/1. Catalyzes a salvage reaction resulting in the formation of AMP, that is energically less costly than de novo synthesis. This Streptococcus pyogenes serotype M5 (strain Manfredo) protein is Adenine phosphoribosyltransferase.